An 87-amino-acid polypeptide reads, in one-letter code: Large ribosomal subunit protein bL27 (87 aa).

The segment at 1–21 is disordered; it reads MAHKKGQGSTQNNRDSAGRRL.

It belongs to the bacterial ribosomal protein bL27 family.

This chain is Large ribosomal subunit protein bL27, found in Nautilia profundicola (strain ATCC BAA-1463 / DSM 18972 / AmH).